The sequence spans 297 residues: N-acetylmuramic acid 6-phosphate etherase (297 aa).

The region spanning 55-218 is the SIS domain; the sequence is AAAALKSGGR…STGAMVKFGK (164 aa). Glu-83 serves as the catalytic Proton donor. Glu-114 is a catalytic residue.

Belongs to the GCKR-like family. MurNAc-6-P etherase subfamily. Homodimer.

The catalysed reaction is N-acetyl-D-muramate 6-phosphate + H2O = N-acetyl-D-glucosamine 6-phosphate + (R)-lactate. Its pathway is amino-sugar metabolism; 1,6-anhydro-N-acetylmuramate degradation. The protein operates within amino-sugar metabolism; N-acetylmuramate degradation. It participates in cell wall biogenesis; peptidoglycan recycling. Its function is as follows. Specifically catalyzes the cleavage of the D-lactyl ether substituent of MurNAc 6-phosphate, producing GlcNAc 6-phosphate and D-lactate. Together with AnmK, is also required for the utilization of anhydro-N-acetylmuramic acid (anhMurNAc) either imported from the medium or derived from its own cell wall murein, and thus plays a role in cell wall recycling. The protein is N-acetylmuramic acid 6-phosphate etherase of Salmonella typhi.